Here is a 204-residue protein sequence, read N- to C-terminus: MVSEYIDSELKRLEDYALRRVKGIPNNRRLWVLTCMDERVHIEQSLGIQPDDAHIYRNAGGIVTDDAIRSASLTTNFFGTKEIIVVTHTDCGMLRFTGEEVAKYFISKGIKPTEVQLDPLLPAFRISSEEDFIKWFKFYEDLGVKSPDEMALKGVEILRNHPLIPKDVRITGYVYEVETHRLRKPNQIIYNETSKFEHGTIVKE.

Cys-35, His-88, and Cys-91 together coordinate Zn(2+).

The protein belongs to the beta-class carbonic anhydrase family. Forms a hexadecameric catenane homooligomer, through interactions of two interlocked octameric rings. Exists as both octamers and hexadecamers in solution. The cofactor is Zn(2+).

The catalysed reaction is carbon disulfide + 2 H2O = 2 hydrogen sulfide + CO2 + 2 H(+). Its pathway is sulfur metabolism; hydrogen sulfide biosynthesis. Functionally, catalyzes the conversion of carbon disulfide into hydrogen sulfide and carbon dioxide, with carbonyl sulfide as an intermediate. Likely plays a key role in sulfur metabolism that allows Acidianus sp. A1-3 to grow on carbon disulfide as the main carbon and energy source. Does not show carbonic anhydrase activity (hydration of CO(2) to carbonate). The polypeptide is Carbon disulfide hydrolase (Acidianus sp. (strain A1-3)).